Here is a 199-residue protein sequence, read N- to C-terminus: Recombination protein RecR (199 aa).

The segment at 56-71 adopts a C4-type zinc-finger fold; sequence CAVCGNIAEETQCRIC. Residues 79-174 form the Toprim domain; it reads TVICVVEEPK…KVTRLASGLP (96 aa).

It belongs to the RecR family.

Functionally, may play a role in DNA repair. It seems to be involved in an RecBC-independent recombinational process of DNA repair. It may act with RecF and RecO. The chain is Recombination protein RecR from Thermobifida fusca (strain YX).